A 428-amino-acid polypeptide reads, in one-letter code: GTPase Obg (428 aa).

The 158-residue stretch at 1–158 (MFVDQVKIYV…RDVILELKVL (158 aa)) folds into the Obg domain. Residues 159–329 (ADVGLVGFPS…LLFEVANLIE (171 aa)) form the OBG-type G domain. GTP-binding positions include 165–172 (GFPSVGKS), 190–194 (FTTIV), 212–215 (DLPG), 282–285 (NKMD), and 310–312 (SAV). Residues serine 172 and threonine 192 each coordinate Mg(2+). One can recognise an OCT domain in the interval 350–428 (KFDTEGVKFE…ILEYEFEFID (79 aa)).

This sequence belongs to the TRAFAC class OBG-HflX-like GTPase superfamily. OBG GTPase family. In terms of assembly, monomer. It depends on Mg(2+) as a cofactor.

The protein resides in the cytoplasm. Functionally, an essential GTPase which binds GTP, GDP and possibly (p)ppGpp with moderate affinity, with high nucleotide exchange rates and a fairly low GTP hydrolysis rate. Plays a role in control of the cell cycle, stress response, ribosome biogenesis and in those bacteria that undergo differentiation, in morphogenesis control. In Bacillus cereus (strain ATCC 14579 / DSM 31 / CCUG 7414 / JCM 2152 / NBRC 15305 / NCIMB 9373 / NCTC 2599 / NRRL B-3711), this protein is GTPase Obg.